The following is a 572-amino-acid chain: MKKIIGIGVSDGIAVAKAFIIQTPQFDVKKYTNVKMTPTQAKKLLSSAFQKAKKDLEEIKTITVKNINQEAGMIFDAHIQILNDPTITEQLEQQLNKNIHPVIAVDNVFQQTALMFSEMDDKYFKERASDILDLHQRLLSYLTGVKLNDLIRIKSDVIIVANDLTPSQTATLNKKYVKGFLTESGGKTSHAAIMARSMEIPAIVGLKNITSKVEDGKTVGINGRKGIVGFDFSSKDITQWKQEKELESNFQNELKQYTNKLVKTLDGYEVIVASNIGNVKDMDLAVEYNTNGIGLFRTEFLYMSSQDWPDESVQFEAYKTVLQKAKNDLVIIRTLDIGGDKKLNYFQFPHEDNPFLGYRAIRLTLDKQAVFKTQLRALLRASDYGNLGIMFPMVATLDELVQVKQLLTKVQQEFNETKKFKLGIMIEIPSAALAADCLGKHVDFFSIGSNDLIQYSFAADRMNKNVSYLYQPLNPALLRLIKLVVEGGKLNNVWTGMCGEMASDQYAIPLLLGLGLTELSMSASSMFKARMVIAKITINECKSLVEKALKLTSDSAVRKLVENFFKKKNIFI.

H190 (tele-phosphohistidine intermediate) is an active-site residue. Phosphoenolpyruvate is bound by residues R297 and R333. 2 residues coordinate Mg(2+): E427 and D451. Phosphoenolpyruvate-binding positions include 450-451 and R461; that span reads ND. The active-site Proton donor is the C498.

This sequence belongs to the PEP-utilizing enzyme family. Homodimer. Mg(2+) serves as cofactor.

It localises to the cytoplasm. The enzyme catalyses L-histidyl-[protein] + phosphoenolpyruvate = N(pros)-phospho-L-histidyl-[protein] + pyruvate. Functionally, general (non sugar-specific) component of the phosphoenolpyruvate-dependent sugar phosphotransferase system (sugar PTS). This major carbohydrate active-transport system catalyzes the phosphorylation of incoming sugar substrates concomitantly with their translocation across the cell membrane. Enzyme I transfers the phosphoryl group from phosphoenolpyruvate (PEP) to the phosphoryl carrier protein (HPr). This chain is Phosphoenolpyruvate-protein phosphotransferase (ptsI), found in Mycoplasma genitalium (strain ATCC 33530 / DSM 19775 / NCTC 10195 / G37) (Mycoplasmoides genitalium).